The primary structure comprises 136 residues: Large ribosomal subunit protein bL17 (136 aa).

This sequence belongs to the bacterial ribosomal protein bL17 family. Part of the 50S ribosomal subunit. Contacts protein L32.

The chain is Large ribosomal subunit protein bL17 from Rhodopseudomonas palustris (strain BisB5).